We begin with the raw amino-acid sequence, 383 residues long: Small ribosomal subunit protein mS31 (383 aa).

The transit peptide at Met1 to Leu21 directs the protein to the mitochondrion. Residues Val158–Glu187 are a coiled coil.

This sequence belongs to the mitochondrion-specific ribosomal protein mS31 family. As to quaternary structure, component of the mitochondrial ribosome small subunit (28S) which comprises a 12S rRNA and about 30 distinct proteins.

Its subcellular location is the mitochondrion. This is Small ribosomal subunit protein mS31 (mrps-31) from Caenorhabditis elegans.